The primary structure comprises 289 residues: Digeranylgeranylglyceryl phosphate synthase (289 aa).

Helical transmembrane passes span 18–38 (LMAG…LISG), 47–67 (AFPF…SGAG), 99–119 (FYFS…INSI), 120–140 (CGSI…TLKG), 163–183 (IFGF…ALAI), 218–238 (LAVL…FMSV), 243–263 (YIYL…QLLV), and 269–289 (KSSK…IAGV).

It belongs to the UbiA prenyltransferase family. DGGGP synthase subfamily. It depends on Mg(2+) as a cofactor.

Its subcellular location is the cell membrane. The enzyme catalyses sn-3-O-(geranylgeranyl)glycerol 1-phosphate + (2E,6E,10E)-geranylgeranyl diphosphate = 2,3-bis-O-(geranylgeranyl)-sn-glycerol 1-phosphate + diphosphate. It functions in the pathway membrane lipid metabolism; glycerophospholipid metabolism. Functionally, prenyltransferase that catalyzes the transfer of the geranylgeranyl moiety of geranylgeranyl diphosphate (GGPP) to the C2 hydroxyl of (S)-3-O-geranylgeranylglyceryl phosphate (GGGP). This reaction is the second ether-bond-formation step in the biosynthesis of archaeal membrane lipids. This is Digeranylgeranylglyceryl phosphate synthase from Methanosarcina mazei (strain ATCC BAA-159 / DSM 3647 / Goe1 / Go1 / JCM 11833 / OCM 88) (Methanosarcina frisia).